The chain runs to 208 residues: Ribosomal RNA small subunit methyltransferase G (208 aa).

S-adenosyl-L-methionine-binding positions include Gly78, Phe83, 101-103 (ERS), 129-130 (IE), and Arg142.

This sequence belongs to the methyltransferase superfamily. RNA methyltransferase RsmG family.

It localises to the cytoplasm. In terms of biological role, specifically methylates the N7 position of a guanine in 16S rRNA. This chain is Ribosomal RNA small subunit methyltransferase G, found in Borrelia garinii subsp. bavariensis (strain ATCC BAA-2496 / DSM 23469 / PBi) (Borreliella bavariensis).